Reading from the N-terminus, the 361-residue chain is Tetraacyldisaccharide 4'-kinase (361 aa).

Residue 68-75 participates in ATP binding; that stretch reads TVGGTGKT.

This sequence belongs to the LpxK family.

The enzyme catalyses a lipid A disaccharide + ATP = a lipid IVA + ADP + H(+). The protein operates within glycolipid biosynthesis; lipid IV(A) biosynthesis; lipid IV(A) from (3R)-3-hydroxytetradecanoyl-[acyl-carrier-protein] and UDP-N-acetyl-alpha-D-glucosamine: step 6/6. Functionally, transfers the gamma-phosphate of ATP to the 4'-position of a tetraacyldisaccharide 1-phosphate intermediate (termed DS-1-P) to form tetraacyldisaccharide 1,4'-bis-phosphate (lipid IVA). The protein is Tetraacyldisaccharide 4'-kinase of Pelobacter propionicus (strain DSM 2379 / NBRC 103807 / OttBd1).